Here is a 218-residue protein sequence, read N- to C-terminus: Phosphoribosylformylglycinamidine synthase subunit PurQ (218 aa).

Positions 2–218 (SIAVLRFPGT…GARMLRGLAC (217 aa)) constitute a Glutamine amidotransferase type-1 domain. Cysteine 86 serves as the catalytic Nucleophile. Active-site residues include histidine 195 and glutamate 197.

In terms of assembly, part of the FGAM synthase complex composed of 1 PurL, 1 PurQ and 2 PurS subunits.

Its subcellular location is the cytoplasm. It catalyses the reaction N(2)-formyl-N(1)-(5-phospho-beta-D-ribosyl)glycinamide + L-glutamine + ATP + H2O = 2-formamido-N(1)-(5-O-phospho-beta-D-ribosyl)acetamidine + L-glutamate + ADP + phosphate + H(+). The enzyme catalyses L-glutamine + H2O = L-glutamate + NH4(+). It functions in the pathway purine metabolism; IMP biosynthesis via de novo pathway; 5-amino-1-(5-phospho-D-ribosyl)imidazole from N(2)-formyl-N(1)-(5-phospho-D-ribosyl)glycinamide: step 1/2. Its function is as follows. Part of the phosphoribosylformylglycinamidine synthase complex involved in the purines biosynthetic pathway. Catalyzes the ATP-dependent conversion of formylglycinamide ribonucleotide (FGAR) and glutamine to yield formylglycinamidine ribonucleotide (FGAM) and glutamate. The FGAM synthase complex is composed of three subunits. PurQ produces an ammonia molecule by converting glutamine to glutamate. PurL transfers the ammonia molecule to FGAR to form FGAM in an ATP-dependent manner. PurS interacts with PurQ and PurL and is thought to assist in the transfer of the ammonia molecule from PurQ to PurL. In Wolinella succinogenes (strain ATCC 29543 / DSM 1740 / CCUG 13145 / JCM 31913 / LMG 7466 / NCTC 11488 / FDC 602W) (Vibrio succinogenes), this protein is Phosphoribosylformylglycinamidine synthase subunit PurQ.